The following is a 450-amino-acid chain: Enolase (450 aa).

Glutamine 167 contacts (2R)-2-phosphoglycerate. Residue glutamate 209 is the Proton donor of the active site. Positions 250, 307, and 334 each coordinate Mg(2+). Lysine 359, arginine 388, serine 389, and lysine 410 together coordinate (2R)-2-phosphoglycerate. Catalysis depends on lysine 359, which acts as the Proton acceptor.

The protein belongs to the enolase family. It depends on Mg(2+) as a cofactor.

The protein resides in the cytoplasm. It localises to the secreted. It is found in the cell surface. It carries out the reaction (2R)-2-phosphoglycerate = phosphoenolpyruvate + H2O. Its pathway is carbohydrate degradation; glycolysis; pyruvate from D-glyceraldehyde 3-phosphate: step 4/5. In terms of biological role, catalyzes the reversible conversion of 2-phosphoglycerate (2-PG) into phosphoenolpyruvate (PEP). It is essential for the degradation of carbohydrates via glycolysis. Functionally, 'Moonlights' as a plasminogen receptor and plasmin activator. Contributes to host (pig) cell adhesion; anti-enolase antibodies decrease binding to porcine kidney cells about 60%. Binds host plasminogen and fibronectin in vitro; enhances the activity of host tissue-specific plasminogen activator (tPA), and helps plasminogen and tPA degrade articifial host extracellular matrices. This is Enolase from Mesomycoplasma hyorhinis (strain HUB-1) (Mycoplasma hyorhinis).